A 480-amino-acid chain; its full sequence is Peptidase S41 family protein ustP (480 aa).

The tract at residues 78–97 (CMPNKKSRPPDPRPSLAVGK) is disordered. Positions 134-336 (DVAVLQLPTF…LKQQGVRSIV (203 aa)) are peptidase S41 domain.

This sequence belongs to the peptidase S41A family.

It functions in the pathway mycotoxin biosynthesis. Functionally, peptidase S41 family protein; part of the gene cluster that mediates the biosynthesis of the secondary metabolite ustiloxin B, an antimitotic tetrapeptide. First, ustA is processed by the subtilisin-like endoprotease Kex2 that is outside the ustiloxin B gene cluster, at the C-terminal side of Arg-Lys, after transfer to Golgi apparatus through the endoplasmic reticulum (ER). Cleavage by KEX2 generates 16 peptides YAIG-I to YAIG-XVI. To process the precursor peptide further, at least two peptidases are necessary to cleave the N-terminal and C-terminal sides of the Tyr-Ala-Ile-Gly core peptide which serves as backbone for the synthesis of ustiloxin B, through cyclization and modification of the tyrosine with a non-protein coding amino acid, norvaline. One of the two peptidases must be the serine peptidase ustP; and the other pepdidase is probably ustH. Macrocyclization of the core peptide derived from ustA requires the tyrosinase ustQ, as well as the homologous oxidases ustYa and ustYb, and leads to the production of the first cyclization product N-desmethylustiloxin F. For the formation of N-desmethylustiloxin F, three oxidation steps are required, hydroxylation at the benzylic position, hydroxylation at either the aromatic ring of Tyr or beta-position of Ile, and oxidative cyclization. UstQ may catalyze the oxidation of a phenol moiety, whereas the ustYa and ustYb are most likely responsible for the remaining two-step oxidations. N-desmethylustiloxin F is then methylated by ustM to yield ustiloxin F which in turn substrate of the cytochrome P450 monooxygenase ustC which catalyzes the formation of S-deoxyustiloxin H. The flavoprotein monooxygenases ustF1 and ustF2 then participate in the modification of the side chain of S-deoxyustiloxin H, leading to the synthesis of an oxime intermediate, via ustiloxin H. Finally, carboxylative dehydration performed by the cysteine desulfurase-like protein ustD yields ustiloxin B. This is Peptidase S41 family protein ustP from Aspergillus flavus (strain ATCC 200026 / FGSC A1120 / IAM 13836 / NRRL 3357 / JCM 12722 / SRRC 167).